A 190-amino-acid polypeptide reads, in one-letter code: Heme-binding protein 1 (190 aa).

The protein belongs to the HEBP family. In terms of assembly, monomer. Ubiquitously expressed. Extremely abundant in liver.

The protein resides in the cytoplasm. Its function is as follows. May bind free porphyrinogens that may be present in the cell and thus facilitate removal of these potentially toxic compound. Binds with a high affinity to one molecule of heme or porphyrins. It binds metalloporphyrins, free porphyrins and N-methylprotoporphyrin with similar affinities. The sequence is that of Heme-binding protein 1 (Hebp1) from Mus musculus (Mouse).